A 67-amino-acid polypeptide reads, in one-letter code: UPF0434 protein Lcho_2556 (67 aa).

It belongs to the UPF0434 family.

The polypeptide is UPF0434 protein Lcho_2556 (Leptothrix cholodnii (strain ATCC 51168 / LMG 8142 / SP-6) (Leptothrix discophora (strain SP-6))).